The following is a 642-amino-acid chain: Voltage-gated potassium channel KCNC2 (642 aa).

The Cytoplasmic portion of the chain corresponds to 1–233 (MGKIESNERV…EDPYSSRAAR (233 aa)). The tract at residues 45–98 (DCLTAAGDKLQPLPPPLSPPPRPPPLSPVPSGCFEGGAGNCSSHGGNGGNGGSD) is disordered. Positions 56 to 72 (PLPPPLSPPPRPPPLSP) are enriched in pro residues. A compositionally biased stretch (gly residues) spans 78–98 (FEGGAGNCSSHGGNGGNGGSD). 4 residues coordinate Zn(2+): histidine 128, cysteine 134, cysteine 155, and cysteine 156. Residues 234–254 (FIAFASLFFILVSITTFCLET) form a helical membrane-spanning segment. N-linked (GlcNAc...) asparagine glycans are attached at residues asparagine 263 and asparagine 270. A helical transmembrane segment spans residues 287-307 (TYVEGVCVVWFTFEFLVRIVF). Over 308 to 317 (SPNKLEFIKN) the chain is Cytoplasmic. Residues 318-338 (LLNIIDFVAILPFYLEVGLSG) traverse the membrane as a helical segment. The chain crosses the membrane as a helical; Voltage-sensor span at residues 350–372 (FLRVVRFVRILRIFKLTRHFVGL). The Cytoplasmic segment spans residues 373–385 (RVLGHTLRASTNE). The helical transmembrane segment at 386–406 (FLLLIIFLALGVLIFATMIYY) threads the bilayer. Residues threonine 441, leucine 442, glycine 443, and tyrosine 444 each coordinate K(+). The Selectivity filter motif lies at 441-446 (TLGYGD). Residues 457–477 (VGALCALAGVLTIAMPVPVIV) traverse the membrane as a helical segment. Topologically, residues 478-642 (NNFGMYYSLA…RSRSPIPSIL (165 aa)) are cytoplasmic. The segment at 542-576 (SVLSGDDSTGSEPPLSPPERLPIRRSSTRDKNRRG) is disordered. The residue at position 604 (serine 604) is a Phosphoserine.

This sequence belongs to the potassium channel family. C (Shaw) (TC 1.A.1.2) subfamily. Kv3.2/KCNC2 sub-subfamily. As to quaternary structure, homotetramer and heterotetramer with other channel-forming alpha subunits, such as KCNC1. Interacts with KCNC1. Homotetramer or heterotetramer channel activity is regulated by association with modulating ancillary subunits such as KCNE1, KCNE2 and KCNE3, creating a functionally diverse range of channel complexes. Interacts with KCNE1, KCNE2 and KCNE3. Post-translationally, phosphorylated by PKA in cortical synaptosomes. cAMP-dependent phosphorylation inhibits channel activity. Histamine H2 receptor- and PKA-induced phosphorylation extends action potential spike duration, reduces action potential spike amplitude, sustains maximum firing frequency in hippocampal interneurons; also reduces the incidence of high-frequency oscillations in hippocampal CA3 pyramidal cell layers. As to expression, weakly expressed in the brain at postnatal age day 7 (P7) and increased at P60. Not detectable in newborn hippocampus. Expressed weakly at P7 in the early developing hippocampus, increasing progressively and reaching a plateau of expression at P14 that is maintained throughout P51. Expressed in paravalbumin- and somatostain-containing inhibitory interneurons of the hippocampus; in the CA1/CA3 stratum oriens-alveus and stratum pyramidale and in cells within the hilus and subgranular layer of the dentate gyrus (DG). Strongly expressed in parvalbumin (PV)-containing fast-spiking GABAergic inhibitor interneurons in deep cortical layers V and VI. Also expressed in non-fast-spiking calbindin (CB)- and/or somatostatin (SOM)-containing interneurons in deep cortical layers V and VI. Expressed in starburst amacrine cells of the retina in the inner nuclear layer (INL) and ganglion cell layer (GCL). Expressed in the suprachiasmatic nucleus (SCN) (at protein level). Expressed in the early developing brain, increasing progressively until P14.

It is found in the cell membrane. The protein localises to the membrane. Its subcellular location is the perikaryon. The protein resides in the cell projection. It localises to the axon. It is found in the dendrite. The protein localises to the postsynaptic cell membrane. Its subcellular location is the presynaptic cell membrane. The protein resides in the synapse. It localises to the synaptosome. It is found in the apical cell membrane. The protein localises to the basolateral cell membrane. The catalysed reaction is K(+)(in) = K(+)(out). Inhibited by millimolar levels of tetraethylammonium (TEA). Contrary to other channels, inhibited only by millimolar levels of 4-aminopyridine (4-AP). Inhibited by Stichodactyla helianthus peptide ShK. Voltage-gated potassium channel that mediates transmembrane potassium transport in excitable membranes, primarily in the brain. Contributes to the regulation of the fast action potential repolarization and in sustained high-frequency firing in neurons of the central nervous system. Homotetramer channels mediate delayed-rectifier voltage-dependent potassium currents that activate rapidly at high-threshold voltages and inactivate slowly. Forms tetrameric channels through which potassium ions pass in accordance with their electrochemical gradient. The channel alternates between opened and closed conformations in response to the voltage difference across the membrane. Can form functional homotetrameric and heterotetrameric channels that contain variable proportions of KCNC1, and possibly other family members as well; channel properties depend on the type of alpha subunits that are part of the channel. Channel properties may be modulated by either the association with ancillary subunits, such as KCNE1, KCNE2 and KCNE3 or indirectly by nitric oxide (NO) through a cGMP- and PKG-mediated signaling cascade, slowing channel activation and deactivation of delayed rectifier potassium channels. Contributes to fire sustained trains of very brief action potentials at high frequency in thalamocortical and suprachiasmatic nucleus (SCN) neurons, in hippocampal and neocortical interneurons and in retinal ganglion cells. Sustained maximal action potential firing frequency in inhibitory hippocampal interneurons is negatively modulated by histamine H2 receptor activation in a cAMP- and protein kinase (PKA) phosphorylation-dependent manner. Plays a role in maintaining the fidelity of synaptic transmission in neocortical GABAergic interneurons by generating action potential (AP) repolarization at nerve terminals, thus reducing spike-evoked calcium influx and GABA neurotransmitter release. Required for long-range synchronization of gamma oscillations over distance in the neocortex. Contributes to the modulation of the circadian rhythm of spontaneous action potential firing in suprachiasmatic nucleus (SCN) neurons in a light-dependent manner. This Mus musculus (Mouse) protein is Voltage-gated potassium channel KCNC2.